We begin with the raw amino-acid sequence, 605 residues long: F-box/WD repeat-containing protein 1A (605 aa).

Residues 128-177 (ASYEKEKELCVKYFEQWSESDQVEFVEHLISQMCHYQHGHINSYLKPMLQ) are homodimerization domain D. One can recognise an F-box domain in the interval 182–228 (TALPARGLDHIAENILSYLDAKSLCAAELVCKEWYRVTSDGMLWKKL). The required for down-regulation of SNAI1 stretch occupies residues 190 to 228 (DHIAENILSYLDAKSLCAAELVCKEWYRVTSDGMLWKKL). WD repeat units lie at residues 301 to 338 (ETSK…CKRI), 341 to 378 (GHTG…MLNT), 381 to 418 (HHCE…DITL), 424 to 461 (GHRA…FVRT), 464 to 503 (GHKR…RVLE), 505 to 541 (HEEL…DPRA), and 553 to 590 (EHSG…AAHA).

As to quaternary structure, homodimer. Self-associates. Component of the SCF(BTRC) complex, composed of SKP1, CUL1 and BTRC. Direct interaction with SKP1 with SKP1 occurs via the F-box domain. Interacts with phosphorylated ubiquitination substrates SMAD3 and SMAD4. Interacts with phosphorylated ubiquitination substrates CTNNB1, NFKBIA, NFKBIB, NFKBIE, NFKB1/nuclear factor NF-kappa-B p105 subunit, ATF4, CDC25A, DLG1, FBXO5 and SNAI1; the interaction requires the phosphorylation of the 2 serine residues in the substrate destruction motif D-S-G-X(2,3,4)-S. Binds UBQLN1. Interacts with CDC34 and UBE2R2. Interacts with FBXW11. Interacts with CUL4A and DDB1. Part of a SCF(BTRC)-like complex lacking CUL1, which is associated with phosphorylated NKBIA and RELA; RELA interacts directly with NFKBIA. Interacts with the phosphorylated form of GLI3. Interacts with CLU. Interacts with PER1 (phosphorylated), PER2 (phosphorylated) and PER3. Interacts with phosphorylated ubiquitination substrate CEP68. Interacts with ZC3H12A; this interaction occurs when ZC3H12A is phosphorylated in a IKBKB/IKKB-dependent manner. Interacts with HSF1; this interaction occurs during mitosis and induces HSF1 ubiquitin-dependent degradation, a process inhibited by CDC20. Interacts with NFE2L1. Interacts with INAVA. Interacts with IL10RA; this interaction leads to IL10RA ubiquitination and subsequent degradation. Interacts with REST. Interacts with KLF4; this interaction leads to KLF4 ubiquitination and subsequent degradation. Interacts with UBR2, as part of a SCF(BTRC) complex; the interaction mediates 'Lys-48'-linked ubiquitination of UBR2 and is regulated by DUSP22 in the T-cell receptor signaling pathway. Post-translationally, ubiquitinated via 'Lys-11'-linked polyubiquitin by some cullin-5-RING E3 ubiquitin-protein ligase complex (ECS complex), leading to its degradation. Deubiquitinated by OTUD5, promoting its stability. In terms of tissue distribution, expressed in heart, brain, liver, skeletal muscle and, most strongly, in testis.

The protein localises to the cytoplasm. It is found in the nucleus. It functions in the pathway protein modification; protein ubiquitination. Functionally, substrate recognition component of a SCF (SKP1-CUL1-F-box protein) E3 ubiquitin-protein ligase complex which mediates the ubiquitination and subsequent proteasomal degradation of target proteins. Recognizes and binds to phosphorylated target proteins. SCF(BTRC) mediates the ubiquitination of phosphorylated NFKB, ATF4, CDC25A, DLG1, FBXO5, PER1, SMAD3, SMAD4, SNAI1 and probably NFKB2. SCF(BTRC) mediates the ubiquitination of CTNNB1 and participates in Wnt signaling. SCF(BTRC) mediates the ubiquitination of NFKBIA, NFKBIB and NFKBIE; the degradation frees the associated NFKB1 to translocate into the nucleus and to activate transcription. Ubiquitination of NFKBIA occurs at 'Lys-21' and 'Lys-22'. The SCF(FBXW11) complex also regulates NF-kappa-B by mediating ubiquitination of phosphorylated NFKB1: specifically ubiquitinates the p105 form of NFKB1, leading to its degradation. SCF(BTRC) mediates the ubiquitination of CEP68; this is required for centriole separation during mitosis. SCF(BTRC) mediates the ubiquitination and subsequent degradation of nuclear NFE2L1. Has an essential role in the control of the clock-dependent transcription via degradation of phosphorylated PER1 and PER2. May be involved in ubiquitination and subsequent proteasomal degradation through a DBB1-CUL4 E3 ubiquitin-protein ligase. Required for activation of NFKB-mediated transcription by IL1B, MAP3K14, MAP3K1, IKBKB and TNF. Required for proteolytic processing of GLI3. Mediates ubiquitination of REST, thereby leading to its proteasomal degradation. SCF(BTRC) mediates the ubiquitination and subsequent proteasomal degradation of KLF4; thereby negatively regulating cell pluripotency maintenance and embryogenesis. SCF(BTRC) acts as a regulator of mTORC1 signaling pathway by catalyzing ubiquitination and subsequent proteasomal degradation of phosphorylated DEPTOR, TFE3 and MITF. SCF(BTRC) directs 'Lys-48'-linked ubiquitination of UBR2 in the T-cell receptor signaling pathway. The protein is F-box/WD repeat-containing protein 1A of Mus musculus (Mouse).